A 287-amino-acid polypeptide reads, in one-letter code: Ribosomal RNA small subunit methyltransferase A (287 aa).

S-adenosyl-L-methionine is bound by residues Asn28, Leu30, Gly55, Glu77, Asp103, and Asn123.

This sequence belongs to the class I-like SAM-binding methyltransferase superfamily. rRNA adenine N(6)-methyltransferase family. RsmA subfamily.

Its subcellular location is the cytoplasm. It catalyses the reaction adenosine(1518)/adenosine(1519) in 16S rRNA + 4 S-adenosyl-L-methionine = N(6)-dimethyladenosine(1518)/N(6)-dimethyladenosine(1519) in 16S rRNA + 4 S-adenosyl-L-homocysteine + 4 H(+). Functionally, specifically dimethylates two adjacent adenosines (A1518 and A1519) in the loop of a conserved hairpin near the 3'-end of 16S rRNA in the 30S particle. May play a critical role in biogenesis of 30S subunits. This is Ribosomal RNA small subunit methyltransferase A from Rhodopseudomonas palustris (strain BisB5).